The following is a 198-amino-acid chain: Na(+)-translocating NADH-quinone reductase subunit E (198 aa).

The next 6 membrane-spanning stretches (helical) occupy residues 11–31 (SIFIENMALSFFLGMCTFLAV), 39–59 (FGLGVAVIVVLTIAIPVNNLV), 77–97 (FLNFITFIGVIAALVQILEMI), 110–130 (GIFLPLITVNCAIFGGVSFMV), 140–160 (IVYGFGSGVGWMLAIVALAGI), and 176–196 (LGITFITVGLMALGFMSFSGV).

Belongs to the NqrDE/RnfAE family. In terms of assembly, composed of six subunits; NqrA, NqrB, NqrC, NqrD, NqrE and NqrF.

The protein resides in the cell inner membrane. It catalyses the reaction a ubiquinone + n Na(+)(in) + NADH + H(+) = a ubiquinol + n Na(+)(out) + NAD(+). NQR complex catalyzes the reduction of ubiquinone-1 to ubiquinol by two successive reactions, coupled with the transport of Na(+) ions from the cytoplasm to the periplasm. NqrA to NqrE are probably involved in the second step, the conversion of ubisemiquinone to ubiquinol. This chain is Na(+)-translocating NADH-quinone reductase subunit E, found in Photobacterium profundum (strain SS9).